The primary structure comprises 149 residues: D-aminoacyl-tRNA deacylase (149 aa).

The Gly-cisPro motif, important for rejection of L-amino acids motif lies at Gly137–Pro138.

It belongs to the DTD family. In terms of assembly, homodimer.

It localises to the cytoplasm. It catalyses the reaction glycyl-tRNA(Ala) + H2O = tRNA(Ala) + glycine + H(+). The catalysed reaction is a D-aminoacyl-tRNA + H2O = a tRNA + a D-alpha-amino acid + H(+). Its function is as follows. An aminoacyl-tRNA editing enzyme that deacylates mischarged D-aminoacyl-tRNAs. Also deacylates mischarged glycyl-tRNA(Ala), protecting cells against glycine mischarging by AlaRS. Acts via tRNA-based rather than protein-based catalysis; rejects L-amino acids rather than detecting D-amino acids in the active site. By recycling D-aminoacyl-tRNA to D-amino acids and free tRNA molecules, this enzyme counteracts the toxicity associated with the formation of D-aminoacyl-tRNA entities in vivo and helps enforce protein L-homochirality. The chain is D-aminoacyl-tRNA deacylase from Clostridium tetani (strain Massachusetts / E88).